Reading from the N-terminus, the 431-residue chain is Zeaxanthin glucosyltransferase (431 aa).

The protein belongs to the UDP-glycosyltransferase family.

The catalysed reaction is all-trans-zeaxanthin + 2 UDP-alpha-D-glucose = zeaxanthin bis(beta-D-glucoside) + 2 UDP + 2 H(+). The protein operates within carotenoid biosynthesis; zeaxanthin diglucoside biosynthesis. Functionally, catalyzes the glycosylation reaction which converts zeaxanthin to zeaxanthin bis(beta-D-glucoside). The reaction proceeds in two steps with the monoglucoside as an intermediate. The sequence is that of Zeaxanthin glucosyltransferase (crtX) from Pantoea ananas (Erwinia uredovora).